Consider the following 237-residue polypeptide: Ribonuclease PH (237 aa).

Phosphate-binding positions include arginine 86 and glycine 124–arginine 126.

The protein belongs to the RNase PH family. Homohexameric ring arranged as a trimer of dimers.

The catalysed reaction is tRNA(n+1) + phosphate = tRNA(n) + a ribonucleoside 5'-diphosphate. In terms of biological role, phosphorolytic 3'-5' exoribonuclease that plays an important role in tRNA 3'-end maturation. Removes nucleotide residues following the 3'-CCA terminus of tRNAs; can also add nucleotides to the ends of RNA molecules by using nucleoside diphosphates as substrates, but this may not be physiologically important. Probably plays a role in initiation of 16S rRNA degradation (leading to ribosome degradation) during starvation. The sequence is that of Ribonuclease PH from Shewanella piezotolerans (strain WP3 / JCM 13877).